Here is a 471-residue protein sequence, read N- to C-terminus: uncharacterized protein (471 aa).

Residues 13–57 (KGGATIGATPMESDSSVSALSGSSASKVSRRGRRRSHLASKSSAP) are disordered. A compositionally biased stretch (low complexity) spans 27-39 (SSVSALSGSSASK). A compositionally biased stretch (basic residues) spans 40–50 (VSRRGRRRSHL). 2 consecutive CCHC-type zinc fingers follow at residues 397–414 (YACH…ECRQ) and 417–434 (SVCR…KCQN). The segment at 438–457 (CRNCRHRGQPSGHYMLSNAC) is gag-like cysteine motif.

The protein to corresponding ORF of B.mori (R1BM).

This is an uncharacterized protein from Drosophila melanogaster (Fruit fly).